The chain runs to 475 residues: Putative aldehyde dehydrogenase SSP0762 (475 aa).

201–207 (GDGQGVG) lines the NAD(+) pocket. Catalysis depends on residues Glu-245 and Cys-279.

Belongs to the aldehyde dehydrogenase family.

The enzyme catalyses an aldehyde + NAD(+) + H2O = a carboxylate + NADH + 2 H(+). This Staphylococcus saprophyticus subsp. saprophyticus (strain ATCC 15305 / DSM 20229 / NCIMB 8711 / NCTC 7292 / S-41) protein is Putative aldehyde dehydrogenase SSP0762.